The primary structure comprises 227 residues: MTNNLSGYRNKFVRVKTSKKRTVSSSNWLRRQLNDPYVAKARIEGFRSRAAYKLLEIHEKFKIFTPNMKVVDLGAAPGGWSQVASKLIKATDGNLKNKIISVDLLEIEPIPGVESFQKDFFEKDTEELIIQALKGKADIVLSDMASNTIGHKATDHIRTLLLCEQAFEFALKVLNPSGHFIAKIFRGGAENELLNKVKREFSTVKHFKPSSSRKESTEIYLVALNRK.

Residues glycine 78, tryptophan 80, aspartate 103, aspartate 119, and aspartate 143 each contribute to the S-adenosyl-L-methionine site. The Proton acceptor role is filled by lysine 183.

The protein belongs to the class I-like SAM-binding methyltransferase superfamily. RNA methyltransferase RlmE family.

The protein resides in the cytoplasm. It catalyses the reaction uridine(2552) in 23S rRNA + S-adenosyl-L-methionine = 2'-O-methyluridine(2552) in 23S rRNA + S-adenosyl-L-homocysteine + H(+). Functionally, specifically methylates the uridine in position 2552 of 23S rRNA at the 2'-O position of the ribose in the fully assembled 50S ribosomal subunit. The chain is Ribosomal RNA large subunit methyltransferase E from Rickettsia bellii (strain RML369-C).